A 122-amino-acid chain; its full sequence is Basic phospholipase A2 homolog (122 aa).

Intrachain disulfides connect Cys26/Cys115, Cys28/Cys44, Cys43/Cys95, Cys49/Cys122, Cys50/Cys88, Cys57/Cys81, and Cys75/Cys86. An important for membrane-damaging activities in eukaryotes and bacteria; heparin-binding region spans residues 105–117; it reads KRYMTYPNILCSS.

Belongs to the phospholipase A2 family. Group II subfamily. N49 sub-subfamily. As to expression, expressed by the venom gland.

It localises to the secreted. The chain is Basic phospholipase A2 homolog from Gloydius halys (Chinese water mocassin).